The chain runs to 80 residues: SPbeta prophage-derived thioredoxin-like protein YosR (80 aa).

In terms of domain architecture, Thioredoxin spans 1–80 (MRLIKLEQPN…ELDELLKELR (80 aa)). A disulfide bond links C11 and C14.

This sequence belongs to the thioredoxin family.

This is SPbeta prophage-derived thioredoxin-like protein YosR (yosR) from Bacillus subtilis (strain 168).